The chain runs to 48 residues: Light-harvesting polypeptide B-885 beta-1 chain (48 aa).

Residues 1 to 20 are Cytoplasmic-facing; sequence AEDRKSLSGLTEQEAQEFGT. Residues 21–43 form a helical membrane-spanning segment; the sequence is LYTQGVAFVAVIAVVAHALVWAW. His37 contributes to the a bacteriochlorophyll binding site. At 44–48 the chain is on the periplasmic side; it reads RPWLQ.

Belongs to the antenna complex beta subunit family. The core complex is formed by different alpha and beta chains, binding bacteriochlorophyll molecules, and arranged most probably in tetrameric structures disposed around the reaction center. The non-pigmented gamma chains may constitute additional components.

The protein localises to the cell inner membrane. Its function is as follows. Antenna complexes are light-harvesting systems, which transfer the excitation energy to the reaction centers. In Rhodocyclus tenuis (Rhodospirillum tenue), this protein is Light-harvesting polypeptide B-885 beta-1 chain.